A 379-amino-acid polypeptide reads, in one-letter code: Beta-1,3-N-acetylglucosaminyltransferase lunatic fringe (379 aa).

Residues 1–8 (MLKRCGRR) are Cytoplasmic-facing. The helical; Signal-anchor for type II membrane protein transmembrane segment at 9–29 (LLLALAGALLACLLVLTADPP) threads the bilayer. Residues 30–379 (PPPLPAERGR…TPWCPRTAIF (350 aa)) are Lumenal-facing. Residues 86–107 (RDAGPPPGAAPRPADGHPRPLA) form a disordered region. Arg-129 serves as a coordination point for substrate. An N-linked (GlcNAc...) asparagine glycan is attached at Asn-167. Cystine bridges form between Cys-168–Cys-179 and Cys-197–Cys-260. Residue Asp-201 coordinates substrate. Asp-202 lines the Mn(2+) pocket. Asp-290 is an active-site residue. Position 314 (His-314) interacts with Mn(2+). An intrachain disulfide couples Cys-364 to Cys-373.

It belongs to the glycosyltransferase 31 family. Mn(2+) serves as cofactor. The cofactor is Co(2+). A soluble form may be derived from the membrane form by proteolytic processing.

It localises to the golgi apparatus. The protein localises to the golgi apparatus membrane. It carries out the reaction 3-O-(alpha-L-fucosyl)-L-threonyl-[EGF-like domain protein] + UDP-N-acetyl-alpha-D-glucosamine = 3-O-(N-acetyl-beta-D-glucosaminyl-(1-&gt;3)-alpha-L-fucosyl)-L-threonyl-[EGF-like domain protein] + UDP + H(+). It catalyses the reaction 3-O-(alpha-L-fucosyl)-L-seryl-[EGF-like domain protein] + UDP-N-acetyl-alpha-D-glucosamine = 3-O-(N-acetyl-beta-D-glucosaminyl-(1-&gt;3)-alpha-L-fucosyl)-L-seryl-[EGF-like domain protein] + UDP + H(+). Functionally, glycosyltransferase that initiates the elongation of O-linked fucose residues attached to EGF-like repeats in the extracellular domain of Notch molecules. Modulates NOTCH1 activity by modifying O-fucose residues at specific EGF-like domains resulting in inhibition of NOTCH1 activation by JAG1 and enhancement of NOTCH1 activation by DLL1 via an increase in its binding to DLL1. Decreases the binding of JAG1 to NOTCH2 but not that of DLL1. Essential mediator of somite segmentation and patterning. This is Beta-1,3-N-acetylglucosaminyltransferase lunatic fringe from Homo sapiens (Human).